A 149-amino-acid chain; its full sequence is D-aminoacyl-tRNA deacylase (149 aa).

A Gly-cisPro motif, important for rejection of L-amino acids motif is present at residues 137–138; the sequence is GP.

It belongs to the DTD family. In terms of assembly, homodimer.

The protein resides in the cytoplasm. The catalysed reaction is glycyl-tRNA(Ala) + H2O = tRNA(Ala) + glycine + H(+). It catalyses the reaction a D-aminoacyl-tRNA + H2O = a tRNA + a D-alpha-amino acid + H(+). Its function is as follows. An aminoacyl-tRNA editing enzyme that deacylates mischarged D-aminoacyl-tRNAs. Also deacylates mischarged glycyl-tRNA(Ala), protecting cells against glycine mischarging by AlaRS. Acts via tRNA-based rather than protein-based catalysis; rejects L-amino acids rather than detecting D-amino acids in the active site. By recycling D-aminoacyl-tRNA to D-amino acids and free tRNA molecules, this enzyme counteracts the toxicity associated with the formation of D-aminoacyl-tRNA entities in vivo and helps enforce protein L-homochirality. The protein is D-aminoacyl-tRNA deacylase of Syntrophus aciditrophicus (strain SB).